Consider the following 251-residue polypeptide: MIKWPWKAQEITQNADWLWDDALAIPLLVNLTAQEQARLIALAERFLQQKRLVALQGVELDSLKSARIALIFCLPILELGLEWLDGFHEVLIYPAPFVVDDEWEDDIGLVHSQRVVQSGQSWQQGPIILNWLDIQDSFDASGFNLIIHEVAHKLDMRNGDRASGIPFIPLRDVAGWEHDLHAAMNNIQDEIDLVGENAASIDAYAATDPAECFAVLSEYFFSAPELFAPRFPALWQRFCQFYRQDPSQRLR.

4 residues coordinate Zn(2+): His111, His148, His152, and Glu211.

The protein belongs to the MtfA family. In terms of assembly, interacts with Mlc. Zn(2+) is required as a cofactor.

The protein resides in the cytoplasm. In terms of biological role, involved in the modulation of the activity of the glucose-phosphotransferase system (glucose-PTS). Interacts with the transcriptional repressor Mlc, preventing its interaction with DNA and leading to the modulation of expression of genes regulated by Mlc, including ptsG, which encodes the PTS system glucose-specific EIICB component. Functionally, shows zinc-dependent metallopeptidase activity. The chain is Mlc titration factor A from Salmonella arizonae (strain ATCC BAA-731 / CDC346-86 / RSK2980).